Reading from the N-terminus, the 362-residue chain is Ribosomal RNA large subunit methyltransferase F (362 aa).

Over residues 1-28 (MNTPLKPKHGQKTNRKPKANKPVVKKQQ) the composition is skewed to basic residues. The interval 1–40 (MNTPLKPKHGQKTNRKPKANKPVVKKQQTKQPPTHKVQGE) is disordered.

Belongs to the methyltransferase superfamily. METTL16/RlmF family.

It is found in the cytoplasm. It carries out the reaction adenosine(1618) in 23S rRNA + S-adenosyl-L-methionine = N(6)-methyladenosine(1618) in 23S rRNA + S-adenosyl-L-homocysteine + H(+). Its function is as follows. Specifically methylates the adenine in position 1618 of 23S rRNA. This is Ribosomal RNA large subunit methyltransferase F from Vibrio cholerae serotype O1 (strain M66-2).